The chain runs to 4699 residues: Fat-like cadherin-related tumor suppressor homolog (4699 aa).

A signal peptide spans Met-1–Ser-38. Over Lys-39 to Gly-4285 the chain is Extracellular. 34 consecutive Cadherin domains span residues Ser-63–Phe-183, Tyr-184–Ile-291, Ala-288–Phe-400, Thr-401–Phe-507, Glu-508–Phe-613, Glu-614–Leu-716, Val-773–Ile-877, Gln-878–Phe-980, Gly-981–Phe-1088, Asp-1089–Tyr-1198, Asp-1194–Phe-1299, Asp-1300–Ile-1405, Lys-1408–Phe-1506, Ala-1507–Phe-1612, Thr-1613–Phe-1717, Pro-1718–Phe-1815, Val-1816–Phe-1932, Asn-1933–Phe-2033, Gln-2034–Phe-2140, Val-2141–Phe-2241, Glu-2242–Ile-2341, Glu-2342–Phe-2449, Val-2450–Phe-2551, Asp-2552–Phe-2654, Leu-2655–Phe-2763, Glu-2764–Phe-2860, Asp-2861–Phe-2967, Lys-2968–Tyr-3072, Leu-3068–Phe-3169, Ser-3170–Phe-3273, Ser-3274–Phe-3378, Leu-3379–Phe-3483, Ser-3484–Val-3588, and Thr-3589–Phe-3696. Residues Asn-68 and Asn-159 are each glycosylated (N-linked (GlcNAc...) asparagine). A glycan (N-linked (GlcNAc...) asparagine) is linked at Asn-367. N-linked (GlcNAc...) asparagine glycosylation is found at Asn-782, Asn-846, and Asn-926. 6 N-linked (GlcNAc...) asparagine glycosylation sites follow: Asn-1109, Asn-1201, Asn-1315, Asn-1442, Asn-1476, and Asn-1514. Intrachain disulfides connect Cys-3807–Cys-3819, Cys-3814–Cys-3851, Cys-3853–Cys-3862, Cys-3869–Cys-3880, Cys-3874–Cys-3891, Cys-3893–Cys-3902, Cys-4071–Cys-4105, Cys-4117–Cys-4128, Cys-4122–Cys-4138, Cys-4140–Cys-4149, Cys-4156–Cys-4167, Cys-4161–Cys-4177, Cys-4179–Cys-4188, Cys-4194–Cys-4205, Cys-4199–Cys-4214, Cys-4216–Cys-4224, Cys-4231–Cys-4242, Cys-4236–Cys-4251, and Cys-4253–Cys-4262. The 39-residue stretch at Thr-3865–Glu-3903 folds into the EGF-like 1 domain. Residues Ala-3921–Cys-4105 enclose the Laminin G-like domain. 4 EGF-like domains span residues Arg-4113–Glu-4150, Asp-4152–Glu-4189, Tyr-4190–Glu-4225, and Asp-4227–Gly-4263. A helical membrane pass occupies residues Ile-4286–Leu-4306. Over Lys-4307–Asn-4699 the chain is Cytoplasmic.

Localizes where basal actin filaments terminate.

The protein localises to the cell membrane. Required for the planar polarity of actin filament orientation at the basal side of ovarian follicle cells. Required for proper egg chamber shape and elongation of the egg chamber during oogenesis. Required for the correct planar polarization of Rab10 within the basal follicle cell epithelium and is therefore indirectly involved in the Rab10-dependent remodeling of the basal membrane during egg chamber elongation. The sequence is that of Fat-like cadherin-related tumor suppressor homolog (kug) from Drosophila melanogaster (Fruit fly).